The sequence spans 478 residues: Ribulose bisphosphate carboxylase large chain (478 aa).

The propeptide occupies Met-1–Ser-2. Pro-3 bears the N-acetylproline mark. The residue at position 14 (Lys-14) is an N6,N6,N6-trimethyllysine. Asn-123 and Thr-173 together coordinate substrate. The active-site Proton acceptor is the Lys-175. Lys-177 is a binding site for substrate. Positions 201, 203, and 204 each coordinate Mg(2+). Residue Lys-201 is modified to N6-carboxylysine. His-294 (proton acceptor) is an active-site residue. Substrate contacts are provided by Arg-295, His-327, and Ser-379.

The protein belongs to the RuBisCO large chain family. Type I subfamily. Heterohexadecamer of 8 large chains and 8 small chains; disulfide-linked. The disulfide link is formed within the large subunit homodimers. Requires Mg(2+) as cofactor. Post-translationally, the disulfide bond which can form in the large chain dimeric partners within the hexadecamer appears to be associated with oxidative stress and protein turnover.

It localises to the plastid. The protein resides in the chloroplast. It carries out the reaction 2 (2R)-3-phosphoglycerate + 2 H(+) = D-ribulose 1,5-bisphosphate + CO2 + H2O. The enzyme catalyses D-ribulose 1,5-bisphosphate + O2 = 2-phosphoglycolate + (2R)-3-phosphoglycerate + 2 H(+). Its function is as follows. RuBisCO catalyzes two reactions: the carboxylation of D-ribulose 1,5-bisphosphate, the primary event in carbon dioxide fixation, as well as the oxidative fragmentation of the pentose substrate in the photorespiration process. Both reactions occur simultaneously and in competition at the same active site. The polypeptide is Ribulose bisphosphate carboxylase large chain (Lemna minor (Common duckweed)).